The chain runs to 322 residues: Reticulocalbin-1 (322 aa).

The signal sequence occupies residues 1–19 (MDVLGFICAVFLGTVVLHA). N44 carries N-linked (GlcNAc...) asparagine glycosylation. EF-hand domains follow at residues 70–105 (ESKD…VQKR), 106–141 (YVYE…YYLS), 157–192 (KMLP…EEFE), 194–229 (MKDI…HEDR), 235–270 (WVKT…QDYD), and 271–306 (HAQA…FVGS). Positions 83, 85, 87, 89, 94, 119, 121, 123, 125, 130, 170, 172, 174, 181, 207, 209, 211, 213, 218, 248, 250, 252, 254, 259, 284, 286, 288, 290, and 295 each coordinate Ca(2+). The short motif at 319–322 (HDEL) is the Prevents secretion from ER element.

Belongs to the CREC family.

Its subcellular location is the endoplasmic reticulum lumen. In terms of biological role, may regulate calcium-dependent activities in the endoplasmic reticulum lumen or post-ER compartment. The chain is Reticulocalbin-1 (rcn1) from Takifugu rubripes (Japanese pufferfish).